The following is a 775-amino-acid chain: MIAHNLGYPRIGDNRELKKACEQYWSGAITQQKLQDVAKAIRTNNWLTQKDAGLDLIPCNDFSFYDQVLDMSFMLGLIPERFSSLLQKKDLTELDIYFAMARGYQKDGYDITAMEMTKWFDTNYHYIVPEFRKDQKFSPISEKAIREYTEAKVVIGKAAKPVLLGPVSYLLAGKEKEAGFNRIELIENLLPVYTKLLATLQQNGAEWIQLDEPFLVMDLTVQERKTYETTYTALRNLFPSLKFIVATYFECTGTNIDIAAKLPVDALHLDLVRCPSQLSDILTPAFISSNTMLSLGVVDGRNVWKNDFSTSSTFITKAIAALGKERVMIAPSCSLLHVPCDLDNEKNGNVLTPEIKNWMAFAKQKLHEVAALKKLNRAPMQSEELRLLKANTESIENRAKSKLIHKQHVKARVKAVQPSDSQRKSLFKSRQQIQEKALQLPLMPTTTIGSFPQTDEVRANRAKYKKGDITLAQYEDFVKTEMTKAIEWQEKIGIDVLVHGEFERNDMVEYFGEQLKGYVFSENGWVQSYGSRCVKPPIIYGDIERTEPMTVAWTTLAQSLTKKYMKGMLTGPVTILQWSFVRDDQPRRDTCMQIAFAIRDEVVDLEAAGIKIIQIDEPAIREGLPLRRENWETYLNWAVECFRISASGVKDETQIHTHMCYSEFNDIIKNIAAMDADVITIETSRSQMELLDAFVDFNYPNEIGPGVYDIHSPRIPTTDEMADLLNKAMHVLPVRNIWVNPDCGLKTRRWPETEAALINMVAAAQKIRKEITTVV.

Residues 15-18 (RELK) and Lys118 each bind 5-methyltetrahydropteroyltri-L-glutamate. L-homocysteine is bound by residues 448–450 (IGS) and Glu501. L-methionine contacts are provided by residues 448–450 (IGS) and Glu501. 5-methyltetrahydropteroyltri-L-glutamate is bound by residues 532-533 (RC) and Trp578. L-homocysteine is bound at residue Asp616. Residue Asp616 participates in L-methionine binding. 5-methyltetrahydropteroyltri-L-glutamate is bound at residue Glu622. Zn(2+) contacts are provided by His658, Cys660, and Glu682. Catalysis depends on His711, which acts as the Proton donor. Residue Cys743 participates in Zn(2+) binding.

The protein belongs to the vitamin-B12 independent methionine synthase family. It depends on Zn(2+) as a cofactor.

The enzyme catalyses 5-methyltetrahydropteroyltri-L-glutamate + L-homocysteine = tetrahydropteroyltri-L-glutamate + L-methionine. Its pathway is amino-acid biosynthesis; L-methionine biosynthesis via de novo pathway; L-methionine from L-homocysteine (MetE route): step 1/1. Catalyzes the transfer of a methyl group from 5-methyltetrahydrofolate to homocysteine resulting in methionine formation. The sequence is that of 5-methyltetrahydropteroyltriglutamate--homocysteine methyltransferase from Cytophaga hutchinsonii (strain ATCC 33406 / DSM 1761 / CIP 103989 / NBRC 15051 / NCIMB 9469 / D465).